Here is a 505-residue protein sequence, read N- to C-terminus: Deoxyguanosinetriphosphate triphosphohydrolase (505 aa).

Positions 66-273 constitute an HD domain; that stretch reads RLTHSMEVQQ…MEAADDISYC (208 aa).

This sequence belongs to the dGTPase family. Type 1 subfamily. In terms of assembly, homotetramer. Mg(2+) serves as cofactor.

It catalyses the reaction dGTP + H2O = 2'-deoxyguanosine + triphosphate + H(+). Functionally, dGTPase preferentially hydrolyzes dGTP over the other canonical NTPs. The sequence is that of Deoxyguanosinetriphosphate triphosphohydrolase from Salmonella typhimurium (strain LT2 / SGSC1412 / ATCC 700720).